The sequence spans 161 residues: Phosphopantetheine adenylyltransferase (161 aa).

Residue Ser9 coordinates substrate. ATP contacts are provided by residues 9–10 (SF) and His17. The substrate site is built by Lys41, Leu73, and Lys87. ATP-binding positions include 88 to 90 (GLR), Glu98, and 123 to 129 (YSYLSSS).

It belongs to the bacterial CoaD family. In terms of assembly, homohexamer. It depends on Mg(2+) as a cofactor.

It localises to the cytoplasm. It catalyses the reaction (R)-4'-phosphopantetheine + ATP + H(+) = 3'-dephospho-CoA + diphosphate. It functions in the pathway cofactor biosynthesis; coenzyme A biosynthesis; CoA from (R)-pantothenate: step 4/5. Functionally, reversibly transfers an adenylyl group from ATP to 4'-phosphopantetheine, yielding dephospho-CoA (dPCoA) and pyrophosphate. The chain is Phosphopantetheine adenylyltransferase from Clostridium novyi (strain NT).